The sequence spans 722 residues: Ribosomal RNA large subunit methyltransferase K/L (722 aa).

The THUMP domain occupies 55-167; sequence TGYRACLWSR…GNEGTLYLDL (113 aa).

It belongs to the methyltransferase superfamily. RlmKL family.

Its subcellular location is the cytoplasm. The enzyme catalyses guanosine(2445) in 23S rRNA + S-adenosyl-L-methionine = N(2)-methylguanosine(2445) in 23S rRNA + S-adenosyl-L-homocysteine + H(+). The catalysed reaction is guanosine(2069) in 23S rRNA + S-adenosyl-L-methionine = N(2)-methylguanosine(2069) in 23S rRNA + S-adenosyl-L-homocysteine + H(+). In terms of biological role, specifically methylates the guanine in position 2445 (m2G2445) and the guanine in position 2069 (m7G2069) of 23S rRNA. This chain is Ribosomal RNA large subunit methyltransferase K/L, found in Desulfotalea psychrophila (strain LSv54 / DSM 12343).